The following is an 884-amino-acid chain: Protein P (884 aa).

Positions 1–184 (MHPFSRLFRN…GKPYSWEHRQ (184 aa)) are terminal protein domain (TP). Residues 185 to 387 (LVQHNGQQHK…YCIHHIVSSL (203 aa)) form a spacer region. Residues 299 to 345 (RNSGHTTWFSSASNSNKSRSREKAYSSNSTSKRYSPPLNYEKSDFSS) are disordered. Positions 388-729 (DDWGPCTVTG…YEELWPVVRQ (342 aa)) are polymerase/reverse transcriptase domain (RT). The region spanning 398 to 639 (DVTIKSPRTP…NHLHFMGYVI (242 aa)) is the Reverse transcriptase domain. Positions 470, 590, and 591 each coordinate Mg(2+).

The protein belongs to the hepadnaviridae P protein family.

The enzyme catalyses DNA(n) + a 2'-deoxyribonucleoside 5'-triphosphate = DNA(n+1) + diphosphate. It carries out the reaction Endonucleolytic cleavage to 5'-phosphomonoester.. With respect to regulation, activated by host HSP70 and HSP40 in vitro to be able to bind the epsilon loop of the pgRNA. Because deletion of the RNase H region renders the protein partly chaperone-independent, the chaperones may be needed indirectly to relieve occlusion of the RNA-binding site by this domain. Inhibited by several reverse-transcriptase inhibitors: Lamivudine, Adefovir and Entecavir. Multifunctional enzyme that converts the viral RNA genome into dsDNA in viral cytoplasmic capsids. This enzyme displays a DNA polymerase activity that can copy either DNA or RNA templates, and a ribonuclease H (RNase H) activity that cleaves the RNA strand of RNA-DNA heteroduplexes in a partially processive 3'- to 5'-endonucleasic mode. Neo-synthesized pregenomic RNA (pgRNA) are encapsidated together with the P protein, and reverse-transcribed inside the nucleocapsid. Initiation of reverse-transcription occurs first by binding the epsilon loop on the pgRNA genome, and is initiated by protein priming, thereby the 5'-end of (-)DNA is covalently linked to P protein. Partial (+)DNA is synthesized from the (-)DNA template and generates the relaxed circular DNA (RC-DNA) genome. After budding and infection, the RC-DNA migrates in the nucleus, and is converted into a plasmid-like covalently closed circular DNA (cccDNA). The activity of P protein does not seem to be necessary for cccDNA generation, and is presumably released from (+)DNA by host nuclear DNA repair machinery. This Marmota monax (Woodchuck) protein is Protein P.